The chain runs to 276 residues: Octanoyltransferase LipM (276 aa).

The 216-residue stretch at 31-246 (GLIPPTIRFY…GFEKGLSIKL (216 aa)) folds into the BPL/LPL catalytic domain. The active-site Acyl-thioester intermediate is the Cys148.

The protein belongs to the octanoyltransferase LipM family. Monomer.

It carries out the reaction octanoyl-[ACP] + L-lysyl-[protein] = N(6)-octanoyl-L-lysyl-[protein] + holo-[ACP] + H(+). Its pathway is protein modification; protein lipoylation via endogenous pathway; protein N(6)-(lipoyl)lysine from octanoyl-[acyl-carrier-protein]. Catalyzes the transfer of endogenously produced octanoic acid from octanoyl-acyl-carrier-protein onto the lipoyl domain of GcvH, an intermediate carrier during protein lipoylation. This chain is Octanoyltransferase LipM, found in Halalkalibacterium halodurans (strain ATCC BAA-125 / DSM 18197 / FERM 7344 / JCM 9153 / C-125) (Bacillus halodurans).